A 98-amino-acid chain; its full sequence is Aspartyl/glutamyl-tRNA(Asn/Gln) amidotransferase subunit C (98 aa).

Belongs to the GatC family. Heterotrimer of A, B and C subunits.

It carries out the reaction L-glutamyl-tRNA(Gln) + L-glutamine + ATP + H2O = L-glutaminyl-tRNA(Gln) + L-glutamate + ADP + phosphate + H(+). It catalyses the reaction L-aspartyl-tRNA(Asn) + L-glutamine + ATP + H2O = L-asparaginyl-tRNA(Asn) + L-glutamate + ADP + phosphate + 2 H(+). In terms of biological role, allows the formation of correctly charged Asn-tRNA(Asn) or Gln-tRNA(Gln) through the transamidation of misacylated Asp-tRNA(Asn) or Glu-tRNA(Gln) in organisms which lack either or both of asparaginyl-tRNA or glutaminyl-tRNA synthetases. The reaction takes place in the presence of glutamine and ATP through an activated phospho-Asp-tRNA(Asn) or phospho-Glu-tRNA(Gln). The chain is Aspartyl/glutamyl-tRNA(Asn/Gln) amidotransferase subunit C from Mycobacterium avium (strain 104).